Consider the following 946-residue polypeptide: Inter-alpha-trypsin inhibitor heavy chain H2 (946 aa).

A signal peptide spans 1–18 (MQRLACVLIWLFLLEEQA). A propeptide spanning residues 19–54 (FEIPANEYSEFAGYSNLVELAPDKFPFVQENRRYQR) is cleaved from the precursor. One can recognise a VIT domain in the interval 56-185 (LPEESGEMTD…KVQFELHYQE (130 aa)). Ser-60 carries the post-translational modification Phosphoserine. Residues Asn-118 and Asn-263 are each glycosylated (N-linked (GlcNAc...) asparagine). Residues Glu-282 and Glu-283 each carry the 4-carboxyglutamate modification. A VWFA domain is found at 308 to 468 (PKNILFVIDV…YDFLKRLSNE (161 aa)). Asn-445 carries N-linked (GlcNAc...) asparagine glycosylation. Ser-466 carries the phosphoserine modification. Asn-578 is a glycosylation site (N-linked (GlcNAc...) asparagine). Asp-702 is subject to Aspartate 1-(chondroitin 4-sulfate)-ester. A propeptide spanning residues 703–946 (PHFIIYLPKS…PQLYSFLKRP (244 aa)) is cleaved from the precursor. A Phosphoserine modification is found at Ser-886.

The protein belongs to the ITIH family. I-alpha-I plasma protease inhibitors are assembled from one or two heavy chains (HC) and one light chain, bikunin. Inter-alpha-inhibitor (I-alpha-I) is composed of ITIH1/HC1, ITIH2/HC2 and bikunin. Heavy chains are linked to bikunin via chondroitin 4-sulfate esterified to the alpha-carboxyl of the C-terminal aspartate after propeptide cleavage. In terms of processing, phosphorylated by FAM20C in the extracellular medium.

The protein localises to the secreted. Functionally, may act as a carrier of hyaluronan in serum or as a binding protein between hyaluronan and other matrix protein, including those on cell surfaces in tissues to regulate the localization, synthesis and degradation of hyaluronan which are essential to cells undergoing biological processes. The chain is Inter-alpha-trypsin inhibitor heavy chain H2 (ITIH2) from Mesocricetus auratus (Golden hamster).